The following is a 405-amino-acid chain: Homocitrate synthase AksA (405 aa).

A Pyruvate carboxyltransferase domain is found at 23-274 (IEICDVTLRD…IERYDTTKLT (252 aa)).

The protein belongs to the alpha-IPM synthase/homocitrate synthase family.

It carries out the reaction acetyl-CoA + 2-oxoglutarate + H2O = (2R)-homocitrate + CoA + H(+). The enzyme catalyses 2-oxoadipate + acetyl-CoA + H2O = (R)-dihomocitrate + CoA + H(+). It catalyses the reaction 2-oxoheptanedioate + acetyl-CoA + H2O = (R)-trihomocitrate + CoA + H(+). The protein operates within organic acid metabolism; 2-oxosuberate biosynthesis. Its function is as follows. Catalyzes the condensation of alpha-ketoglutarate and acetyl-CoA to form (R)-homocitrate. Can also catalyze the condensation of alpha-ketoadipate with acetyl-CoA to form (R)-homo(2)citrate, and the condensation of alpha-ketopimelate with acetyl-CoA to form (R)-homo(3)citrate. These reactions are part of the biosynthesis pathway of coenzyme B and biotin. In Methanosarcina acetivorans (strain ATCC 35395 / DSM 2834 / JCM 12185 / C2A), this protein is Homocitrate synthase AksA (aksA).